The chain runs to 137 residues: Small heat shock protein IbpA (137 aa).

A sHSP domain is found at 28-137 (TQSNGGYPPY…AMKPRRIEIK (110 aa)).

Belongs to the small heat shock protein (HSP20) family. As to quaternary structure, monomer. Forms homomultimers of about 100-150 subunits at optimal growth temperatures. Conformation changes to monomers at high temperatures or high ionic concentrations.

It is found in the cytoplasm. In terms of biological role, associates with aggregated proteins, together with IbpB, to stabilize and protect them from irreversible denaturation and extensive proteolysis during heat shock and oxidative stress. Aggregated proteins bound to the IbpAB complex are more efficiently refolded and reactivated by the ATP-dependent chaperone systems ClpB and DnaK/DnaJ/GrpE. Its activity is ATP-independent. The sequence is that of Small heat shock protein IbpA from Pectobacterium atrosepticum (strain SCRI 1043 / ATCC BAA-672) (Erwinia carotovora subsp. atroseptica).